The sequence spans 223 residues: Pleckstrin homology domain-containing family B member 1 (223 aa).

Residues 2–109 form the PH domain; that stretch reads ALVRGGWLWR…WKTALMEANS (108 aa).

In terms of assembly, homodimer. Interacts (via PH domain) with MYO1C. Interacts (via PH domain) with MYO7A. Binds transducins. As to expression, highly expressed in photoreceptor cells, oligodendrocytes and throughout the myelinated parts of the central nervous system. Detected in brain, liver, kidney, spleen and trachea.

Its subcellular location is the membrane. It localises to the cytoplasm. This is Pleckstrin homology domain-containing family B member 1 (Plekhb1) from Rattus norvegicus (Rat).